A 315-amino-acid polypeptide reads, in one-letter code: Methionyl-tRNA formyltransferase (315 aa).

The interval 2–189 (SDSLRIIFAG…LITTLKQLAD (188 aa)) is N-terminal domain. 113-116 (SLLP) contributes to the (6S)-5,6,7,8-tetrahydrofolate binding site. The segment at 210-315 (KEEARIDWSL…EWFIPGNRLA (106 aa)) is C-terminal domain.

This sequence belongs to the Fmt family.

It catalyses the reaction L-methionyl-tRNA(fMet) + (6R)-10-formyltetrahydrofolate = N-formyl-L-methionyl-tRNA(fMet) + (6S)-5,6,7,8-tetrahydrofolate + H(+). Attaches a formyl group to the free amino group of methionyl-tRNA(fMet). The formyl group appears to play a dual role in the initiator identity of N-formylmethionyl-tRNA by promoting its recognition by IF2 and preventing the misappropriation of this tRNA by the elongation apparatus. The protein is Methionyl-tRNA formyltransferase of Salmonella choleraesuis (strain SC-B67).